The sequence spans 303 residues: Quinolinate synthase (303 aa).

2 residues coordinate iminosuccinate: histidine 24 and serine 41. Cysteine 86 contributes to the [4Fe-4S] cluster binding site. Iminosuccinate is bound by residues 112–114 (YVN) and serine 129. Cysteine 172 provides a ligand contact to [4Fe-4S] cluster. Residues 198–200 (HPE) and threonine 215 contribute to the iminosuccinate site. Cysteine 260 serves as a coordination point for [4Fe-4S] cluster.

This sequence belongs to the quinolinate synthase family. Type 2 subfamily. It depends on [4Fe-4S] cluster as a cofactor.

It localises to the cytoplasm. It catalyses the reaction iminosuccinate + dihydroxyacetone phosphate = quinolinate + phosphate + 2 H2O + H(+). It participates in cofactor biosynthesis; NAD(+) biosynthesis; quinolinate from iminoaspartate: step 1/1. Catalyzes the condensation of iminoaspartate with dihydroxyacetone phosphate to form quinolinate. The chain is Quinolinate synthase from Alkaliphilus metalliredigens (strain QYMF).